We begin with the raw amino-acid sequence, 811 residues long: tRNA(Met) cytidine acetyltransferase TmcA (811 aa).

Residues Q267 and R440 each contribute to the ATP site. The 190-residue stretch at R474–P663 folds into the N-acetyltransferase domain. Acetyl-CoA contacts are provided by residues I590–T592, E630, and R637.

It belongs to the TmcA family.

It is found in the cytoplasm. The catalysed reaction is cytidine(34) in elongator tRNA(Met) + acetyl-CoA + ATP + H2O = N(4)-acetylcytidine(34) in elongator tRNA(Met) + ADP + phosphate + CoA + H(+). It catalyses the reaction a cytidine in RNA + acetyl-CoA + ATP + H2O = an N(4)-acetylcytidine in RNA + ADP + phosphate + CoA + H(+). It carries out the reaction a cytidine in tRNA + acetyl-CoA + ATP + H2O = an N(4)-acetylcytidine in tRNA + ADP + phosphate + CoA + H(+). The enzyme catalyses a cytidine in mRNA + acetyl-CoA + ATP + H2O = an N(4)-acetylcytidine in mRNA + ADP + phosphate + CoA + H(+). Functionally, catalyzes the formation of N(4)-acetylcytidine (ac(4)C) at the wobble position of tRNA(Met), by using acetyl-CoA as an acetyl donor and ATP (or GTP). Catalyzes the formation of 404 N(4)-acetylcytidine (ac(4)C) sites in RNA, almost always on the middle C of a CCG motif. There 173 ac(4)C sites in rRNA, 35 in non-coding (nc)RNA, 119 in mRNA and 77 in tRNA. More acetylation is observed at 85 and 95 than at 65 or 75 degrees Celsius. The chain is tRNA(Met) cytidine acetyltransferase TmcA from Thermococcus kodakarensis (strain ATCC BAA-918 / JCM 12380 / KOD1) (Pyrococcus kodakaraensis (strain KOD1)).